Here is a 72-residue protein sequence, read N- to C-terminus: Rubredoxin in uptake hydrogenase operon (72 aa).

Positions 19-70 constitute a Rubredoxin-like domain; the sequence is DAVLECKICWHRYDPAVGDEVWQILAGTPFAALPAHWRCPQCDGDREQFMVV. 4 residues coordinate Fe cation: C24, C27, C57, and C60.

This sequence belongs to the rubredoxin family. Fe(3+) is required as a cofactor.

Could be an electron transport intermediate in hydrogen oxidation. This chain is Rubredoxin in uptake hydrogenase operon (hupR), found in Azotobacter chroococcum mcd 1.